Consider the following 534-residue polypeptide: (E)-beta-farnesene synthase (534 aa).

The Mg(2+) site is built by aspartate 287, aspartate 291, asparagine 431, serine 435, and glutamate 439. A DDXXD motif motif is present at residues 287–291 (DDMMD).

It belongs to the terpene synthase family. It depends on Mg(2+) as a cofactor. Co(2+) is required as a cofactor. Requires Mn(2+) as cofactor.

It localises to the cytoplasm. It catalyses the reaction (2E,6E)-farnesyl diphosphate = (E)-beta-farnesene + diphosphate. It functions in the pathway secondary metabolite biosynthesis; terpenoid biosynthesis. Sesquiterpene cyclase catalyzing the production of beta-farnesene and alpha-bergamotene in equal amounts from farnesyl diphosphate. Involved in indirect defense by producing volatile signals attracting natural enemies of herbivores. In Zea mays subsp. mexicana (Mexican teosinte), this protein is (E)-beta-farnesene synthase.